Consider the following 533-residue polypeptide: Probable fucosyltransferase 5 (533 aa).

The Cytoplasmic segment spans residues 1 to 13; sequence MYQKFQISGKIVK. A helical; Signal-anchor for type II membrane protein membrane pass occupies residues 14 to 34; that stretch reads TLGLKMKVLIAVSFGSLLFIL. At 35 to 533 the chain is on the lumenal side; sequence SYSNNFNNKL…YGGLKLYDEF (499 aa). Residues Asn-202, Asn-227, Asn-374, Asn-396, and Asn-475 are each glycosylated (N-linked (GlcNAc...) asparagine).

Belongs to the glycosyltransferase 37 family. Expressed in roots, leaves, flowers and siliques.

The protein localises to the golgi apparatus. It is found in the golgi stack membrane. It participates in protein modification; protein glycosylation. May be involved in cell wall biosynthesis. May act as a fucosyltransferase. The sequence is that of Probable fucosyltransferase 5 (FUT5) from Arabidopsis thaliana (Mouse-ear cress).